A 324-amino-acid polypeptide reads, in one-letter code: UDP-N-acetylenolpyruvoylglucosamine reductase (324 aa).

Residues 36–203 (FRAGGLAELM…THAIFEGFPE (168 aa)) enclose the FAD-binding PCMH-type domain. The active site involves Arg183. Ser232 functions as the Proton donor in the catalytic mechanism. Glu302 is an active-site residue.

The protein belongs to the MurB family. The cofactor is FAD.

It localises to the cytoplasm. The catalysed reaction is UDP-N-acetyl-alpha-D-muramate + NADP(+) = UDP-N-acetyl-3-O-(1-carboxyvinyl)-alpha-D-glucosamine + NADPH + H(+). It participates in cell wall biogenesis; peptidoglycan biosynthesis. Cell wall formation. The sequence is that of UDP-N-acetylenolpyruvoylglucosamine reductase from Sinorhizobium fredii (strain NBRC 101917 / NGR234).